The following is a 448-amino-acid chain: Ribosomal protein uS12 methylthiotransferase RimO (448 aa).

Residues 13 to 128 enclose the MTTase N-terminal domain; it reads KSFFITTLGC…AGEILRKNFP (116 aa). [4Fe-4S] cluster is bound by residues Cys-22, Cys-58, Cys-91, Cys-167, Cys-171, and Cys-174. The Radical SAM core domain maps to 153-382; sequence NYSKPYSYVK…AYLGTLKTIH (230 aa). In terms of domain architecture, TRAM spans 383–448; the sequence is QNRIGKIYPC…ELDMSGTWVD (66 aa).

This sequence belongs to the methylthiotransferase family. RimO subfamily. The cofactor is [4Fe-4S] cluster.

It localises to the cytoplasm. It carries out the reaction L-aspartate(89)-[ribosomal protein uS12]-hydrogen + (sulfur carrier)-SH + AH2 + 2 S-adenosyl-L-methionine = 3-methylsulfanyl-L-aspartate(89)-[ribosomal protein uS12]-hydrogen + (sulfur carrier)-H + 5'-deoxyadenosine + L-methionine + A + S-adenosyl-L-homocysteine + 2 H(+). In terms of biological role, catalyzes the methylthiolation of an aspartic acid residue of ribosomal protein uS12. The protein is Ribosomal protein uS12 methylthiotransferase RimO of Leptospira biflexa serovar Patoc (strain Patoc 1 / Ames).